A 111-amino-acid polypeptide reads, in one-letter code: MQRERTAESSLRVISKEKNSITVEMINYDNTLLRTLVEEILKDDQVDEARYYIKHPVIDNPQIYVRVKSGKPQSAIKRAVRKLSKLYEDLGTQFQKEFQRYESDHMIKAVE.

It belongs to the archaeal Rpo11/eukaryotic RPB11/RPC19 RNA polymerase subunit family. Part of the RNA polymerase complex.

The protein localises to the cytoplasm. The enzyme catalyses RNA(n) + a ribonucleoside 5'-triphosphate = RNA(n+1) + diphosphate. DNA-dependent RNA polymerase (RNAP) catalyzes the transcription of DNA into RNA using the four ribonucleoside triphosphates as substrates. This is DNA-directed RNA polymerase subunit Rpo11 from Thermoplasma acidophilum (strain ATCC 25905 / DSM 1728 / JCM 9062 / NBRC 15155 / AMRC-C165).